The following is a 466-amino-acid chain: 3-isopropylmalate dehydratase large subunit (466 aa).

[4Fe-4S] cluster is bound by residues cysteine 347, cysteine 407, and cysteine 410.

The protein belongs to the aconitase/IPM isomerase family. LeuC type 1 subfamily. Heterodimer of LeuC and LeuD. Requires [4Fe-4S] cluster as cofactor.

It catalyses the reaction (2R,3S)-3-isopropylmalate = (2S)-2-isopropylmalate. The protein operates within amino-acid biosynthesis; L-leucine biosynthesis; L-leucine from 3-methyl-2-oxobutanoate: step 2/4. Functionally, catalyzes the isomerization between 2-isopropylmalate and 3-isopropylmalate, via the formation of 2-isopropylmaleate. The chain is 3-isopropylmalate dehydratase large subunit from Shewanella piezotolerans (strain WP3 / JCM 13877).